We begin with the raw amino-acid sequence, 89 residues long: Large ribosomal subunit protein eL34 (89 aa).

The segment at glycine 45–leucine 71 is disordered.

It belongs to the eukaryotic ribosomal protein eL34 family. Part of the 50S ribosomal subunit.

This Pyrococcus furiosus (strain ATCC 43587 / DSM 3638 / JCM 8422 / Vc1) protein is Large ribosomal subunit protein eL34.